The chain runs to 338 residues: GTPase Obg (338 aa).

The Obg domain maps to 1 to 159; it reads MQFIDQAEIE…RRIRLELKLL (159 aa). One can recognise an OBG-type G domain in the interval 160 to 328; the sequence is AEVGIIGLPN…MLQATWEQLD (169 aa). Residues 166–173, 191–195, 213–216, 280–283, and 309–311 each bind GTP; these read GLPNAGKS, FTTLI, DIPG, NKLD, and SAV. Mg(2+) contacts are provided by serine 173 and threonine 193.

It belongs to the TRAFAC class OBG-HflX-like GTPase superfamily. OBG GTPase family. In terms of assembly, monomer. It depends on Mg(2+) as a cofactor.

It localises to the cytoplasm. Its function is as follows. An essential GTPase which binds GTP, GDP and possibly (p)ppGpp with moderate affinity, with high nucleotide exchange rates and a fairly low GTP hydrolysis rate. Plays a role in control of the cell cycle, stress response, ribosome biogenesis and in those bacteria that undergo differentiation, in morphogenesis control. The sequence is that of GTPase Obg from Gloeothece citriformis (strain PCC 7424) (Cyanothece sp. (strain PCC 7424)).